The primary structure comprises 180 residues: ADP-ribosylation factor 4 (180 aa).

A lipid anchor (N-myristoyl glycine) is attached at G2. Residues 24–31 (GLDAAGKT), 67–71 (DVGGQ), and 126–129 (NKQD) each bind GTP.

The protein belongs to the small GTPase superfamily. Arf family.

Its subcellular location is the golgi apparatus. Its function is as follows. GTP-binding protein involved in protein trafficking; may modulate vesicle budding and uncoating within the Golgi apparatus. May be involved in ciliogenesis. In Xenopus laevis (African clawed frog), this protein is ADP-ribosylation factor 4 (arf4).